Reading from the N-terminus, the 309-residue chain is Homoserine kinase (309 aa).

91–101 is a binding site for ATP; sequence PIGSGLGSSAC.

The protein belongs to the GHMP kinase family. Homoserine kinase subfamily.

It is found in the cytoplasm. It carries out the reaction L-homoserine + ATP = O-phospho-L-homoserine + ADP + H(+). Its pathway is amino-acid biosynthesis; L-threonine biosynthesis; L-threonine from L-aspartate: step 4/5. Catalyzes the ATP-dependent phosphorylation of L-homoserine to L-homoserine phosphate. This chain is Homoserine kinase, found in Yersinia enterocolitica serotype O:8 / biotype 1B (strain NCTC 13174 / 8081).